We begin with the raw amino-acid sequence, 25 residues long: Pregnancy-associated glycoprotein 72 (25 aa).

Residues Asn-4 and Asn-21 are each glycosylated (N-linked (GlcNAc...) asparagine).

It belongs to the peptidase A1 family. N-glycosylated. In terms of tissue distribution, expressed in chorionic epithelium (trophectoderm).

The protein localises to the secreted. Its subcellular location is the extracellular space. This chain is Pregnancy-associated glycoprotein 72, found in Bison bison (American bison).